We begin with the raw amino-acid sequence, 314 residues long: 3'-5' exoribonuclease YhaM (314 aa).

The segment at residues Ser22 to Val90 is a DNA-binding region (OB). The HD domain occupies His163–Lys279.

It belongs to the YhaM family. Mn(2+) is required as a cofactor. The cofactor is Co(2+).

Its function is as follows. Shows a 3'-5' exoribonuclease activity as well as single-stranded DNA 3'-5'exonuclease activity. Plays a role in the secondary pathway of 23S rRNA 3' end maturation. This Bacillus subtilis (strain 168) protein is 3'-5' exoribonuclease YhaM.